A 620-amino-acid polypeptide reads, in one-letter code: Chaperone protein DnaK (620 aa).

Threonine 197 bears the Phosphothreonine; by autocatalysis mark. Residues 591–620 (AQKLGEAMANKNNAEQPKKKDDDVIDAEVE) are disordered.

It belongs to the heat shock protein 70 family.

In terms of biological role, acts as a chaperone. The chain is Chaperone protein DnaK from Helicobacter pylori (strain HPAG1).